An 81-amino-acid polypeptide reads, in one-letter code: Acyl carrier protein (81 aa).

The 76-residue stretch at 2–77 (ASIEERVVDI…EAIDFIEKEK (76 aa)) folds into the Carrier domain. The residue at position 37 (Ser37) is an O-(pantetheine 4'-phosphoryl)serine.

It belongs to the acyl carrier protein (ACP) family. In terms of processing, 4'-phosphopantetheine is transferred from CoA to a specific serine of apo-ACP by AcpS. This modification is essential for activity because fatty acids are bound in thioester linkage to the sulfhydryl of the prosthetic group.

The protein localises to the cytoplasm. It functions in the pathway lipid metabolism; fatty acid biosynthesis. Its function is as follows. Carrier of the growing fatty acid chain in fatty acid biosynthesis. This is Acyl carrier protein from Rhodopirellula baltica (strain DSM 10527 / NCIMB 13988 / SH1).